A 451-amino-acid polypeptide reads, in one-letter code: Chromosomal replication initiator protein DnaA (451 aa).

Residues 1 to 77 (MTENEQIFWN…EVYNAQISVD (77 aa)) form a domain I, interacts with DnaA modulators region. The interval 77-110 (DYVFEEDLMIEQNQTKINQKPKQQALNSLPTVTS) is domain II. A domain III, AAA+ region region spans residues 111–329 (DLNSKYSFEN…GALKDISLGA (219 aa)). Residues Gly155, Gly157, Lys158, and Thr159 each contribute to the ATP site. The domain IV, binds dsDNA stretch occupies residues 330 to 451 (NFKQIDTITV…EIETIKNKIK (122 aa)).

Belongs to the DnaA family. Oligomerizes as a right-handed, spiral filament on DNA at oriC.

It is found in the cytoplasm. Functionally, plays an essential role in the initiation and regulation of chromosomal replication. ATP-DnaA binds to the origin of replication (oriC) to initiate formation of the DNA replication initiation complex once per cell cycle. Binds the DnaA box (a 9 base pair repeat at the origin) and separates the double-stranded (ds)DNA. Forms a right-handed helical filament on oriC DNA; dsDNA binds to the exterior of the filament while single-stranded (ss)DNA is stabiized in the filament's interior. The ATP-DnaA-oriC complex binds and stabilizes one strand of the AT-rich DNA unwinding element (DUE), permitting loading of DNA polymerase. After initiation quickly degrades to an ADP-DnaA complex that is not apt for DNA replication. Binds acidic phospholipids. This Streptococcus pyogenes serotype M49 (strain NZ131) protein is Chromosomal replication initiator protein DnaA.